The sequence spans 261 residues: Small ribosomal subunit protein mS23 (261 aa).

A disordered region spans residues 228-261 (EQRAAAFTGAPEIPSTEDSLGLEEGVEEKQPQQA).

The protein belongs to the mitochondrion-specific ribosomal protein mS23 family. In terms of assembly, component of the mitochondrial small ribosomal subunit.

It localises to the mitochondrion. This chain is Small ribosomal subunit protein mS23 (rsm25), found in Aspergillus oryzae (strain ATCC 42149 / RIB 40) (Yellow koji mold).